Consider the following 53-residue polypeptide: uncharacterized protein (53 aa).

This is an uncharacterized protein from Thermoproteus tenax (TTV1).